Reading from the N-terminus, the 356-residue chain is tRNA-specific 2-thiouridylase MnmA 1 (356 aa).

Residues 8-15 (GMSGGVDS) and methionine 34 each bind ATP. The Nucleophile role is filled by cysteine 103. An intrachain disulfide couples cysteine 103 to cysteine 199. Glycine 127 contacts ATP. The interaction with tRNA stretch occupies residues 149–151 (KDQ). The Cysteine persulfide intermediate role is filled by cysteine 199. The interaction with tRNA stretch occupies residues 305–306 (RY).

This sequence belongs to the MnmA/TRMU family.

The protein resides in the cytoplasm. The enzyme catalyses S-sulfanyl-L-cysteinyl-[protein] + uridine(34) in tRNA + AH2 + ATP = 2-thiouridine(34) in tRNA + L-cysteinyl-[protein] + A + AMP + diphosphate + H(+). In terms of biological role, catalyzes the 2-thiolation of uridine at the wobble position (U34) of tRNA, leading to the formation of s(2)U34. This chain is tRNA-specific 2-thiouridylase MnmA 1, found in Clostridium botulinum (strain Loch Maree / Type A3).